Reading from the N-terminus, the 462-residue chain is GTPase Der (462 aa).

EngA-type G domains follow at residues 3–166 (PVIA…TTET) and 175–348 (IKIA…HSAI). GTP is bound by residues 9-16 (GRPNVGKS), 56-60 (DTGGI), 118-121 (NKTD), 181-188 (GRPNVGKS), 228-232 (DTAGV), and 293-296 (NKWD). The KH-like domain occupies 349-433 (QSFSTPKLTR…PLKIEFKGGQ (85 aa)).

It belongs to the TRAFAC class TrmE-Era-EngA-EngB-Septin-like GTPase superfamily. EngA (Der) GTPase family. Associates with the 50S ribosomal subunit.

Its function is as follows. GTPase that plays an essential role in the late steps of ribosome biogenesis. The polypeptide is GTPase Der (Legionella pneumophila (strain Paris)).